We begin with the raw amino-acid sequence, 490 residues long: Cytochrome P450 71A19 (490 aa).

The helical transmembrane segment at 3–23 (IILVTLCLTTLLALLLLKSIL) threads the bilayer. Position 433 (cysteine 433) interacts with heme.

Belongs to the cytochrome P450 family. Heme is required as a cofactor.

The protein localises to the membrane. The chain is Cytochrome P450 71A19 (CYP71A19) from Arabidopsis thaliana (Mouse-ear cress).